A 1025-amino-acid chain; its full sequence is Myosin phosphatase Rho-interacting protein (1025 aa).

The segment at 2 to 383 is interaction with F-actin; the sequence is SAAKENPCRK…DRRSTEPSVT (382 aa). Positions 43-150 constitute a PH 1 domain; that stretch reads KPIYGGWLLL…WLEMLMVYPR (108 aa). Disordered stretches follow at residues 152–302 and 317–383; these read NKQN…RRSQ and HMET…PSVT. Low complexity predominate over residues 179 to 189; sequence SSSSSSSSSSS. 6 positions are modified to phosphoserine: Ser192, Ser217, Ser218, Ser220, Ser224, and Ser226. Residues 217-236 are compositionally biased toward low complexity; the sequence is SSLSPAQSPSQSQPPAASSL. Over residues 239-263 the composition is skewed to basic and acidic residues; that stretch reads PGLESKEEESAMSSDRMDCGRKVRV. Residues Ser265 and Ser269 each carry the phosphoserine modification. Over residues 271-281 the composition is skewed to basic and acidic residues; it reads EKTKQDLKAEE. Pro residues predominate over residues 284–294; that stretch reads LPPPLSPPSPS. 2 positions are modified to phosphoserine: Ser289 and Ser292. The residue at position 295 (Thr295) is a Phosphothreonine. Ser326 carries the phosphoserine modification. Basic and acidic residues predominate over residues 332-348; it reads RQGRSEKRAFPRKRDFT. At Thr348 the chain carries Phosphothreonine. 2 positions are modified to phosphoserine: Ser362 and Ser365. Positions 387–483 constitute a PH 2 domain; that stretch reads LNFKKGWLTK…WIQTIMKHVH (97 aa). 2 disordered regions span residues 485-545 and 560-591; these read TTAP…TFDW and VGGVGPADTHEPLRPEAEPGELERERARRREE. Residue Ser493 is modified to Phosphoserine. Basic and acidic residues-rich tracts occupy residues 524–545 and 567–589; these read PEQKRSRARERRREGRSKTFDW and DTHEPLRPEAEPGELERERARRR. The interval 546-824 is interaction with RHOA; that stretch reads AEFRPIQQAL…SVQRELEVLS (279 aa). At Ser619 the chain carries Phosphoserine. At Thr646 the chain carries Phosphothreonine. 2 positions are modified to phosphoserine: Ser663 and Ser800. A coiled-coil region spans residues 673-977; the sequence is HELTSLLEKE…AATEALGEKS (305 aa). Residues 824-879 form an interaction with PPP1R12A region; it reads SEQYSQKCLENAHLAQALEAERQALRQCQRENQELNAHNQELNNRLAAEITRLRTL. Residues Ser891, Ser977, Ser993, Ser1014, and Ser1016 each carry the phosphoserine modification.

In terms of assembly, binds F-actin through its N-terminus. Interacts with MYZAP. Binds RHOA, PPP1R12A/MBS and PPP1R12C/MBS85 through adjacent coiled coil domains.

Its subcellular location is the cytoplasm. The protein resides in the cytoskeleton. In terms of biological role, targets myosin phosphatase to the actin cytoskeleton. Required for the regulation of the actin cytoskeleton by RhoA and ROCK1. Depletion leads to an increased number of stress fibers in smooth muscle cells through stabilization of actin fibers by phosphorylated myosin. Overexpression of MRIP as well as its F-actin-binding region leads to disassembly of stress fibers in neuronal cells. The sequence is that of Myosin phosphatase Rho-interacting protein (MPRIP) from Homo sapiens (Human).